The chain runs to 284 residues: RNase adapter protein RapZ (284 aa).

Residue G8 to S15 participates in ATP binding. D56–N59 lines the GTP pocket. The tract at residues R266 to E284 is RNA-binding.

The protein belongs to the RapZ-like family. RapZ subfamily. Homotrimer.

Its function is as follows. Modulates the synthesis of GlmS, by affecting the processing and stability of the regulatory small RNA GlmZ. When glucosamine-6-phosphate (GlcN6P) concentrations are high in the cell, RapZ binds GlmZ and targets it to cleavage by RNase E. Consequently, GlmZ is inactivated and unable to activate GlmS synthesis. Under low GlcN6P concentrations, RapZ is sequestered and inactivated by an other regulatory small RNA, GlmY, preventing GlmZ degradation and leading to synthesis of GlmS. This is RNase adapter protein RapZ from Hamiltonella defensa subsp. Acyrthosiphon pisum (strain 5AT).